We begin with the raw amino-acid sequence, 638 residues long: Chaperone protein DnaK (638 aa).

Thr198 bears the Phosphothreonine; by autocatalysis mark. Positions 598-638 (YEASQKEAAEADAKADAAKDSDVVDADFEEIDEDDDKKKSA) are disordered. A compositionally biased stretch (basic and acidic residues) spans 601–619 (SQKEAAEADAKADAAKDSD). The span at 620–632 (VVDADFEEIDEDD) shows a compositional bias: acidic residues.

This sequence belongs to the heat shock protein 70 family.

In terms of biological role, acts as a chaperone. The protein is Chaperone protein DnaK of Mesorhizobium japonicum (strain LMG 29417 / CECT 9101 / MAFF 303099) (Mesorhizobium loti (strain MAFF 303099)).